The chain runs to 111 residues: uncharacterized protein (111 aa).

2 helical membrane-spanning segments follow: residues 45–65 and 91–111; these read AFLIPVKYTAATVLLALLLVI and LPAGIGLAVLTKVLKHLILHI.

The protein localises to the cell membrane. This is an uncharacterized protein from Methanothermobacter thermautotrophicus (strain ATCC 29096 / DSM 1053 / JCM 10044 / NBRC 100330 / Delta H) (Methanobacterium thermoautotrophicum).